A 274-amino-acid chain; its full sequence is Formamidopyrimidine-DNA glycosylase (274 aa).

P2 acts as the Schiff-base intermediate with DNA in catalysis. E3 acts as the Proton donor in catalysis. Catalysis depends on K57, which acts as the Proton donor; for beta-elimination activity. 3 residues coordinate DNA: H90, R109, and K150. The segment at 235 to 269 (FVYGRKDKACLICGHTIESIKQGQRSTFFCRHCQH) adopts an FPG-type zinc-finger fold. The active-site Proton donor; for delta-elimination activity is R259.

It belongs to the FPG family. As to quaternary structure, monomer. Requires Zn(2+) as cofactor.

The enzyme catalyses Hydrolysis of DNA containing ring-opened 7-methylguanine residues, releasing 2,6-diamino-4-hydroxy-5-(N-methyl)formamidopyrimidine.. It catalyses the reaction 2'-deoxyribonucleotide-(2'-deoxyribose 5'-phosphate)-2'-deoxyribonucleotide-DNA = a 3'-end 2'-deoxyribonucleotide-(2,3-dehydro-2,3-deoxyribose 5'-phosphate)-DNA + a 5'-end 5'-phospho-2'-deoxyribonucleoside-DNA + H(+). Involved in base excision repair of DNA damaged by oxidation or by mutagenic agents. Acts as a DNA glycosylase that recognizes and removes damaged bases. Has a preference for oxidized purines, such as 7,8-dihydro-8-oxoguanine (8-oxoG). Has AP (apurinic/apyrimidinic) lyase activity and introduces nicks in the DNA strand. Cleaves the DNA backbone by beta-delta elimination to generate a single-strand break at the site of the removed base with both 3'- and 5'-phosphates. The protein is Formamidopyrimidine-DNA glycosylase of Proteus mirabilis (strain HI4320).